We begin with the raw amino-acid sequence, 398 residues long: Mu-type opioid receptor (398 aa).

The Extracellular segment spans residues 1–66 (MDSSAGPGNI…CPQTGSPSMV (66 aa)). Residues N9, N31, N38, and N46 are each glycosylated (N-linked (GlcNAc...) asparagine). A helical membrane pass occupies residues 67–91 (TAITIMALYSIVCVVGLFGNFLVMY). Over 92 to 104 (VIVRYTKMKTATN) the chain is Cytoplasmic. The helical transmembrane segment at 105–129 (IYIFNLALADALATSTLPFQSVNYL) threads the bilayer. Residues 130 to 140 (MGTWPFGNILC) lie on the Extracellular side of the membrane. C140 and C217 form a disulfide bridge. The chain crosses the membrane as a helical span at residues 141-163 (KIVISIDYYNMFTSIFTLCTMSV). The Cytoplasmic segment spans residues 164 to 183 (DRYIAVCHPVKALDFRTPRN). Y166 carries the post-translational modification Phosphotyrosine. The helical transmembrane segment at 184 to 205 (AKIVNVCNWILSSAIGLPVMFM) threads the bilayer. The Extracellular portion of the chain corresponds to 206-228 (ATTKYRQGSIDCTLTFSHPTWYW). Residues 229–253 (ENLLKICVFIFAFIMPVLIITVCYG) traverse the membrane as a helical segment. Residues 254–277 (LMILRLKSVRMLSGSKEKDRNLRR) are Cytoplasmic-facing. The chain crosses the membrane as a helical span at residues 278–304 (ITRMVLVVVAVFIVCWTPIHIYVIIKA). At 305–312 (LITIPETT) the chain is on the extracellular side. A helical membrane pass occupies residues 313–336 (FQTVSWHFCIALGYTNSCLNPVLY). An NPxxY; plays a role in stabilizing the activated conformation of the receptor motif is present at residues 332–336 (NPVLY). The Cytoplasmic portion of the chain corresponds to 337–398 (AFLDENFKRC…NLEAETAPLP (62 aa)). C351 carries the S-palmitoyl cysteine lipid modification. The disordered stretch occupies residues 362–383 (NSARIRQNTREHPSTANTVDRT). S363 bears the Phosphoserine mark. T370 carries the phosphothreonine modification. S375 bears the Phosphoserine mark. Phosphothreonine is present on T394.

This sequence belongs to the G-protein coupled receptor 1 family. Forms homooligomers and heterooligomers with other GPCRs, such as OPRD1, OPRK1, OPRL1, NPFFR2, ADRA2A, SSTR2, CNR1 and CCR5 (probably in dimeric forms). Interacts with heterotrimeric G proteins; interaction with a heterotrimeric complex containing GNAI1, GNB1 and GNG2 stabilizes the active conformation of the receptor and increases its affinity for endomorphin-2, the synthetic opioid peptide DAMGO and for morphinan agonists. Interacts with PPL; the interaction disrupts agonist-mediated G-protein activation. Interacts (via C-terminus) with DNAJB4 (via C-terminus). Interacts with calmodulin; the interaction inhibits the constitutive activity of OPRM1; it abolishes basal and attenuates agonist-stimulated G-protein coupling. Interacts with FLNA, PLD2, RANBP9 and WLS and GPM6A. Interacts with RTP4. Interacts with SYP and GNAS. Interacts with RGS9, RGS17, RGS20, RGS4, PPP1R9B and HINT1. Isoform 9 interacts with GRPR. In terms of processing, phosphorylated. Differentially phosphorylated in basal and agonist-induced conditions. Agonist-mediated phosphorylation modulates receptor internalization. Phosphorylated by GRK2 in a agonist-dependent manner. Phosphorylation at Tyr-166 requires receptor activation, is dependent on non-receptor protein tyrosine kinase Src and results in a decrease in agonist efficacy by reducing G-protein coupling efficiency. Phosphorylated on tyrosine residues; the phosphorylation is involved in agonist-induced G-protein-independent receptor down-regulation. Phosphorylation at Ser-375 is involved in G-protein-dependent but not beta-arrestin-dependent activation of the ERK pathway. Ubiquitinated. A basal ubiquitination seems not to be related to degradation. Ubiquitination is increased upon formation of OPRM1:OPRD1 oligomers leading to proteasomal degradation; the ubiquitination is diminished by RTP4.

Its subcellular location is the cell membrane. The protein resides in the cell projection. It localises to the axon. The protein localises to the perikaryon. It is found in the dendrite. Its subcellular location is the endosome. In terms of biological role, receptor for endogenous opioids such as beta-endorphin and endomorphin. Receptor for natural and synthetic opioids including morphine, heroin, DAMGO, fentanyl, etorphine, buprenorphin and methadone. Also activated by enkephalin peptides, such as Met-enkephalin or Met-enkephalin-Arg-Phe, with higher affinity for Met-enkephalin-Arg-Phe. Agonist binding to the receptor induces coupling to an inactive GDP-bound heterotrimeric G-protein complex and subsequent exchange of GDP for GTP in the G-protein alpha subunit leading to dissociation of the G-protein complex with the free GTP-bound G-protein alpha and the G-protein beta-gamma dimer activating downstream cellular effectors. The agonist- and cell type-specific activity is predominantly coupled to pertussis toxin-sensitive G(i) and G(o) G alpha proteins, GNAI1, GNAI2, GNAI3 and GNAO1 isoforms Alpha-1 and Alpha-2, and to a lesser extent to pertussis toxin-insensitive G alpha proteins GNAZ and GNA15. They mediate an array of downstream cellular responses, including inhibition of adenylate cyclase activity and both N-type and L-type calcium channels, activation of inward rectifying potassium channels, mitogen-activated protein kinase (MAPK), phospholipase C (PLC), phosphoinositide/protein kinase (PKC), phosphoinositide 3-kinase (PI3K) and regulation of NF-kappa-B. Also couples to adenylate cyclase stimulatory G alpha proteins. The selective temporal coupling to G-proteins and subsequent signaling can be regulated by RGSZ proteins, such as RGS9, RGS17 and RGS4. Phosphorylation by members of the GPRK subfamily of Ser/Thr protein kinases and association with beta-arrestins is involved in short-term receptor desensitization. Beta-arrestins associate with the GPRK-phosphorylated receptor and uncouple it from the G-protein thus terminating signal transduction. The phosphorylated receptor is internalized through endocytosis via clathrin-coated pits which involves beta-arrestins. The activation of the ERK pathway occurs either in a G-protein-dependent or a beta-arrestin-dependent manner and is regulated by agonist-specific receptor phosphorylation. Acts as a class A G-protein coupled receptor (GPCR) which dissociates from beta-arrestin at or near the plasma membrane and undergoes rapid recycling. Receptor down-regulation pathways are varying with the agonist and occur dependent or independent of G-protein coupling. Endogenous ligands induce rapid desensitization, endocytosis and recycling. Heterooligomerization with other GPCRs can modulate agonist binding, signaling and trafficking properties. Functionally, isoform 9 is involved in morphine-induced scratching and seems to cross-activate GRPR in response to morphine. The protein is Mu-type opioid receptor (Oprm1) of Mus musculus (Mouse).